A 244-amino-acid polypeptide reads, in one-letter code: Na(+)-translocating NADH-quinone reductase subunit E (244 aa).

6 helical membrane-spanning segments follow: residues 11–31 (LLGIFLQATFIQNILLSTFLG), 50–70 (MSVALVLTITGSINWLVHYFI), 90–110 (FLELIMFIVVIAAFTQILELL), 123–143 (GIFLPLIAVNCAILGGVLFGI), 153–173 (VVFSLGSGCGWWLAIVLFATI), and 191–211 (ISFITTGLMAMAFMGLTGIDI).

It belongs to the NqrDE/RnfAE family. Composed of six subunits; NqrA, NqrB, NqrC, NqrD, NqrE and NqrF.

Its subcellular location is the cell inner membrane. The catalysed reaction is a ubiquinone + n Na(+)(in) + NADH + H(+) = a ubiquinol + n Na(+)(out) + NAD(+). NQR complex catalyzes the reduction of ubiquinone-1 to ubiquinol by two successive reactions, coupled with the transport of Na(+) ions from the cytoplasm to the periplasm. NqrA to NqrE are probably involved in the second step, the conversion of ubisemiquinone to ubiquinol. In Chlamydia trachomatis serovar L2 (strain ATCC VR-902B / DSM 19102 / 434/Bu), this protein is Na(+)-translocating NADH-quinone reductase subunit E.